We begin with the raw amino-acid sequence, 90 residues long: UPF0298 protein SSU98_1559 (90 aa).

It belongs to the UPF0298 family.

The protein resides in the cytoplasm. In Streptococcus suis (strain 98HAH33), this protein is UPF0298 protein SSU98_1559.